The following is a 325-amino-acid chain: Lipoyl synthase (325 aa).

The [4Fe-4S] cluster site is built by Cys-71, Cys-76, Cys-82, Cys-97, Cys-101, Cys-104, and Ser-311. The Radical SAM core domain maps to Phe-83–Thr-300.

Belongs to the radical SAM superfamily. Lipoyl synthase family. It depends on [4Fe-4S] cluster as a cofactor.

The protein resides in the cytoplasm. The enzyme catalyses [[Fe-S] cluster scaffold protein carrying a second [4Fe-4S](2+) cluster] + N(6)-octanoyl-L-lysyl-[protein] + 2 oxidized [2Fe-2S]-[ferredoxin] + 2 S-adenosyl-L-methionine + 4 H(+) = [[Fe-S] cluster scaffold protein] + N(6)-[(R)-dihydrolipoyl]-L-lysyl-[protein] + 4 Fe(3+) + 2 hydrogen sulfide + 2 5'-deoxyadenosine + 2 L-methionine + 2 reduced [2Fe-2S]-[ferredoxin]. It functions in the pathway protein modification; protein lipoylation via endogenous pathway; protein N(6)-(lipoyl)lysine from octanoyl-[acyl-carrier-protein]: step 2/2. In terms of biological role, catalyzes the radical-mediated insertion of two sulfur atoms into the C-6 and C-8 positions of the octanoyl moiety bound to the lipoyl domains of lipoate-dependent enzymes, thereby converting the octanoylated domains into lipoylated derivatives. In Methylobacillus flagellatus (strain ATCC 51484 / DSM 6875 / VKM B-1610 / KT), this protein is Lipoyl synthase.